The chain runs to 213 residues: MVERTQIINAVTAAITQAPERKFQESIDITINLKHVDMAQPKNRIDETILLPQAIGVKKIAVLGKGDIVSQARNAGVDLIIGPDEIERLGGVPREARKMAGQYDFFLAETAVMPLVGRWLGQRLGPRGKMPQPIPPTQDITPIVERLRNSVKIRSKDRLNMSVKVGNTGMTVEEVSENIDAVVKRVVGRLESGELNIRSVYVKTTMGPAVKVM.

Belongs to the universal ribosomal protein uL1 family. In terms of assembly, part of the 50S ribosomal subunit.

Its function is as follows. Binds directly to 23S rRNA. Probably involved in E site tRNA release. Functionally, protein L1 is also a translational repressor protein, it controls the translation of its operon by binding to its mRNA. The sequence is that of Large ribosomal subunit protein uL1 from Methanocorpusculum labreanum (strain ATCC 43576 / DSM 4855 / Z).